The chain runs to 316 residues: Annexin A13 (316 aa).

G2 carries the N-myristoyl glycine lipid modification. 4 Annexin repeats span residues F14–D85, R86–Q157, D169–R241, and D245–H316.

It belongs to the annexin family. Monomer and homodimer. Detected in epithelial cells in colon and jejunum (at protein level). Detected in epithelial cells in jejunum.

It is found in the apical cell membrane. The protein localises to the cell membrane. It localises to the cytoplasmic vesicle. Binds to membranes enriched in phosphatidylserine or phosphatidylglycerol in a calcium-dependent manner. Half-maximal membrane binding requires about 60 uM calcium. Does not bind to membranes that lack phospholipids with an acidic headgroup. Functionally, binds to membranes enriched in phosphatidylserine or phosphatidylglycerol in a calcium-dependent manner, but requires higher calcium levels for membrane binding than isoform A. Half-maximal membrane binding requires about 320 uM calcium. This is Annexin A13 (ANXA13) from Homo sapiens (Human).